Consider the following 430-residue polypeptide: Long-chain specific acyl-CoA dehydrogenase, mitochondrial (430 aa).

Residues 1–30 (MAARLLLRSLRVLSARSATLPPPSARCSHS) constitute a mitochondrion transit peptide. N6-acetyllysine is present on Lys42. Ser54 and Ser55 each carry phosphoserine. N6-acetyllysine; alternate is present on residues Lys66 and Lys81. Lys66 and Lys81 each carry N6-succinyllysine; alternate. Residues Lys92 and Lys95 each carry the N6-acetyllysine modification. Lys165 carries the post-translational modification N6-succinyllysine. 170 to 179 (IAMTEPGAGS) provides a ligand contact to FAD. Ser179 contacts substrate. Phosphoserine is present on Ser191. FAD is bound at residue 203-205 (FIT). 227-228 (AH) is a binding site for substrate. Lys240 bears the N6-succinyllysine mark. N6-acetyllysine; alternate is present on residues Lys254 and Lys279. 2 positions are modified to N6-succinyllysine; alternate: Lys254 and Lys279. Residues Tyr282 and 289–292 (PQER) contribute to the substrate site. Glu291 (proton acceptor) is an active-site residue. Arg317 contributes to the FAD binding site. Lys318 bears the N6-acetyllysine mark. Lys322 is modified (N6-acetyllysine; alternate). At Lys322 the chain carries N6-succinyllysine; alternate. Gln328 contributes to the FAD binding site. Lys358 bears the N6-acetyllysine mark. At Ser362 the chain carries Phosphoserine. 385–389 (QLHGG) provides a ligand contact to FAD. 412–413 (GG) lines the substrate pocket. Residue 414–416 (TNE) coordinates FAD.

Belongs to the acyl-CoA dehydrogenase family. As to quaternary structure, homotetramer. Requires FAD as cofactor. In terms of processing, acetylation at Lys-318 and Lys-322 in proximity of the cofactor-binding sites strongly reduces catalytic activity. These sites are deacetylated by SIRT3.

It localises to the mitochondrion matrix. The catalysed reaction is a long-chain 2,3-saturated fatty acyl-CoA + oxidized [electron-transfer flavoprotein] + H(+) = a long-chain (2E)-enoyl-CoA + reduced [electron-transfer flavoprotein]. The enzyme catalyses octanoyl-CoA + oxidized [electron-transfer flavoprotein] + H(+) = (2E)-octenoyl-CoA + reduced [electron-transfer flavoprotein]. It carries out the reaction decanoyl-CoA + oxidized [electron-transfer flavoprotein] + H(+) = (2E)-decenoyl-CoA + reduced [electron-transfer flavoprotein]. It catalyses the reaction dodecanoyl-CoA + oxidized [electron-transfer flavoprotein] + H(+) = (2E)-dodecenoyl-CoA + reduced [electron-transfer flavoprotein]. The catalysed reaction is tetradecanoyl-CoA + oxidized [electron-transfer flavoprotein] + H(+) = (2E)-tetradecenoyl-CoA + reduced [electron-transfer flavoprotein]. The enzyme catalyses oxidized [electron-transfer flavoprotein] + hexadecanoyl-CoA + H(+) = (2E)-hexadecenoyl-CoA + reduced [electron-transfer flavoprotein]. It carries out the reaction octadecanoyl-CoA + oxidized [electron-transfer flavoprotein] + H(+) = (2E)-octadecenoyl-CoA + reduced [electron-transfer flavoprotein]. It catalyses the reaction (5E)-tetradecenoyl-CoA + oxidized [electron-transfer flavoprotein] + H(+) = (2E,5E)-tetradecadienoyl-CoA + reduced [electron-transfer flavoprotein]. The catalysed reaction is (5Z)-tetradecenoyl-CoA + oxidized [electron-transfer flavoprotein] + H(+) = (2E,5Z)-tetradecadienoyl-CoA + reduced [electron-transfer flavoprotein]. The enzyme catalyses oxidized [electron-transfer flavoprotein] + (9Z)-octadecenoyl-CoA + H(+) = (2E,9Z)-octadecadienoyl-CoA + reduced [electron-transfer flavoprotein]. It carries out the reaction hexanoyl-CoA + oxidized [electron-transfer flavoprotein] + H(+) = (2E)-hexenoyl-CoA + reduced [electron-transfer flavoprotein]. It catalyses the reaction eicosanoyl-CoA + oxidized [electron-transfer flavoprotein] + H(+) = (2E)-eicosenoyl-CoA + reduced [electron-transfer flavoprotein]. The catalysed reaction is docosanoyl-CoA + oxidized [electron-transfer flavoprotein] + H(+) = (2E)-docosenoyl-CoA + reduced [electron-transfer flavoprotein]. The enzyme catalyses tetracosanoyl-CoA + oxidized [electron-transfer flavoprotein] + H(+) = (2E)-tetracosenoyl-CoA + reduced [electron-transfer flavoprotein]. The protein operates within lipid metabolism; mitochondrial fatty acid beta-oxidation. Its activity is regulated as follows. Inhibited by crotonyl-CoA, 2-octenoyl-CoA and 2-hexadecenoyl-CoA. Long-chain specific acyl-CoA dehydrogenase is one of the acyl-CoA dehydrogenases that catalyze the first step of mitochondrial fatty acid beta-oxidation, an aerobic process breaking down fatty acids into acetyl-CoA and allowing the production of energy from fats. The first step of fatty acid beta-oxidation consists in the removal of one hydrogen from C-2 and C-3 of the straight-chain fatty acyl-CoA thioester, resulting in the formation of trans-2-enoyl-CoA. Among the different mitochondrial acyl-CoA dehydrogenases, long-chain specific acyl-CoA dehydrogenase can act on saturated and unsaturated acyl-CoAs with 6 to 24 carbons with a preference for 8 to 18 carbons long primary chains. In Rattus norvegicus (Rat), this protein is Long-chain specific acyl-CoA dehydrogenase, mitochondrial.